Here is a 454-residue protein sequence, read N- to C-terminus: uncharacterized protein (454 aa).

The signal sequence occupies residues 1–18 (MRRFTLFVFFLSISIAYA).

This is an uncharacterized protein from Caenorhabditis elegans.